A 435-amino-acid polypeptide reads, in one-letter code: Gamma-glutamyl phosphate reductase (435 aa).

This sequence belongs to the gamma-glutamyl phosphate reductase family.

The protein resides in the cytoplasm. The catalysed reaction is L-glutamate 5-semialdehyde + phosphate + NADP(+) = L-glutamyl 5-phosphate + NADPH + H(+). Its pathway is amino-acid biosynthesis; L-proline biosynthesis; L-glutamate 5-semialdehyde from L-glutamate: step 2/2. Its function is as follows. Catalyzes the NADPH-dependent reduction of L-glutamate 5-phosphate into L-glutamate 5-semialdehyde and phosphate. The product spontaneously undergoes cyclization to form 1-pyrroline-5-carboxylate. The polypeptide is Gamma-glutamyl phosphate reductase (Xylella fastidiosa (strain M12)).